The following is a 687-amino-acid chain: UvrABC system protein C (687 aa).

Positions 16 to 95 (TEPGVYKFRD…IKKFDPHFNV (80 aa)) constitute a GIY-YIG domain. The region spanning 208-243 (DSVVRRLTNEMISASEALDFEKAARKRDDLNAVRKI) is the UVR domain.

Belongs to the UvrC family. In terms of assembly, interacts with UvrB in an incision complex.

Its subcellular location is the cytoplasm. The UvrABC repair system catalyzes the recognition and processing of DNA lesions. UvrC both incises the 5' and 3' sides of the lesion. The N-terminal half is responsible for the 3' incision and the C-terminal half is responsible for the 5' incision. This chain is UvrABC system protein C, found in Corynebacterium diphtheriae (strain ATCC 700971 / NCTC 13129 / Biotype gravis).